An 85-amino-acid polypeptide reads, in one-letter code: Conotoxin Vx15a (85 aa).

Residues 1–23 (MEKLTVLILVATVLLTIQVLAQS) form the signal peptide. Positions 24-49 (DGDKHLMKRSKQYATKRLSALMRGHR) are excised as a propeptide. At Gln50 the chain carries Pyrrolidone carboxylic acid.

It belongs to the conotoxin O2 superfamily. In terms of processing, contains 4 disulfide bonds. Expressed by the venom duct.

It localises to the secreted. This Conus vexillum (Flag cone) protein is Conotoxin Vx15a.